Here is a 247-residue protein sequence, read N- to C-terminus: 1-(5-phosphoribosyl)-5-[(5-phosphoribosylamino)methylideneamino] imidazole-4-carboxamide isomerase (247 aa).

Residue Asp8 is the Proton acceptor of the active site. The active-site Proton donor is the Asp131.

Belongs to the HisA/HisF family.

Its subcellular location is the cytoplasm. The enzyme catalyses 1-(5-phospho-beta-D-ribosyl)-5-[(5-phospho-beta-D-ribosylamino)methylideneamino]imidazole-4-carboxamide = 5-[(5-phospho-1-deoxy-D-ribulos-1-ylimino)methylamino]-1-(5-phospho-beta-D-ribosyl)imidazole-4-carboxamide. It functions in the pathway amino-acid biosynthesis; L-histidine biosynthesis; L-histidine from 5-phospho-alpha-D-ribose 1-diphosphate: step 4/9. In Acidovorax sp. (strain JS42), this protein is 1-(5-phosphoribosyl)-5-[(5-phosphoribosylamino)methylideneamino] imidazole-4-carboxamide isomerase.